The chain runs to 114 residues: Large ribosomal subunit protein uL22 (114 aa).

Belongs to the universal ribosomal protein uL22 family. Part of the 50S ribosomal subunit.

This protein binds specifically to 23S rRNA; its binding is stimulated by other ribosomal proteins, e.g. L4, L17, and L20. It is important during the early stages of 50S assembly. It makes multiple contacts with different domains of the 23S rRNA in the assembled 50S subunit and ribosome. Its function is as follows. The globular domain of the protein is located near the polypeptide exit tunnel on the outside of the subunit, while an extended beta-hairpin is found that lines the wall of the exit tunnel in the center of the 70S ribosome. This chain is Large ribosomal subunit protein uL22, found in Desulfosudis oleivorans (strain DSM 6200 / JCM 39069 / Hxd3) (Desulfococcus oleovorans).